The following is a 518-amino-acid chain: uncharacterized protein (518 aa).

It localises to the virion. This is an uncharacterized protein from Acanthamoeba polyphaga (Amoeba).